Here is a 392-residue protein sequence, read N- to C-terminus: Queuine tRNA-ribosyltransferase (392 aa).

D93 (proton acceptor) is an active-site residue. Substrate contacts are provided by residues 93–97 (DSGGY), D147, Q189, and G216. The segment at 247–253 (GVGAPED) is RNA binding. D266 (nucleophile) is an active-site residue. Residues 271-275 (TRVAR) are RNA binding; important for wobble base 34 recognition. The Zn(2+) site is built by C304, C306, C309, and H335.

The protein belongs to the queuine tRNA-ribosyltransferase family. As to quaternary structure, homodimer. Within each dimer, one monomer is responsible for RNA recognition and catalysis, while the other monomer binds to the replacement base PreQ1. Zn(2+) is required as a cofactor.

The catalysed reaction is 7-aminomethyl-7-carbaguanine + guanosine(34) in tRNA = 7-aminomethyl-7-carbaguanosine(34) in tRNA + guanine. Its pathway is tRNA modification; tRNA-queuosine biosynthesis. Its function is as follows. Catalyzes the base-exchange of a guanine (G) residue with the queuine precursor 7-aminomethyl-7-deazaguanine (PreQ1) at position 34 (anticodon wobble position) in tRNAs with GU(N) anticodons (tRNA-Asp, -Asn, -His and -Tyr). Catalysis occurs through a double-displacement mechanism. The nucleophile active site attacks the C1' of nucleotide 34 to detach the guanine base from the RNA, forming a covalent enzyme-RNA intermediate. The proton acceptor active site deprotonates the incoming PreQ1, allowing a nucleophilic attack on the C1' of the ribose to form the product. After dissociation, two additional enzymatic reactions on the tRNA convert PreQ1 to queuine (Q), resulting in the hypermodified nucleoside queuosine (7-(((4,5-cis-dihydroxy-2-cyclopenten-1-yl)amino)methyl)-7-deazaguanosine). This chain is Queuine tRNA-ribosyltransferase, found in Dehalococcoides mccartyi (strain ATCC BAA-2100 / JCM 16839 / KCTC 5957 / BAV1).